The sequence spans 399 residues: Nuclear hormone receptor family member nhr-125 (399 aa).

The segment at residues 10–80 is a DNA-binding region (nuclear receptor); that stretch reads PFSCRICNQK…MGMDTTKFQY (71 aa). 2 consecutive NR C4-type zinc fingers follow at residues 13–33 and 50–63; these read CRIC…CRAC and CQKG…CKRC. An NR LBD domain is found at 149–392; sequence QLENLTEGFK…EKLQKSQFSI (244 aa).

This sequence belongs to the nuclear hormone receptor family.

The protein localises to the nucleus. Functionally, orphan nuclear receptor. This chain is Nuclear hormone receptor family member nhr-125 (nhr-125), found in Caenorhabditis elegans.